The primary structure comprises 395 residues: Elongation factor Tu (395 aa).

The 195-residue stretch at 10–204 (KPHVNVGTIG…AVDEYIPEPV (195 aa)) folds into the tr-type G domain. The G1 stretch occupies residues 19–26 (GHVDHGKT). Residue 19-26 (GHVDHGKT) coordinates GTP. Mg(2+) is bound at residue T26. The interval 60–64 (GITIA) is G2. The G3 stretch occupies residues 81–84 (DCPG). GTP-binding positions include 81–85 (DCPGH) and 136–139 (NKVD). Residues 136 to 139 (NKVD) form a G4 region. The tract at residues 174 to 176 (SAL) is G5.

Belongs to the TRAFAC class translation factor GTPase superfamily. Classic translation factor GTPase family. EF-Tu/EF-1A subfamily. Monomer.

It localises to the cytoplasm. It carries out the reaction GTP + H2O = GDP + phosphate + H(+). Functionally, GTP hydrolase that promotes the GTP-dependent binding of aminoacyl-tRNA to the A-site of ribosomes during protein biosynthesis. The protein is Elongation factor Tu of Exiguobacterium sp. (strain ATCC BAA-1283 / AT1b).